Consider the following 116-residue polypeptide: U16-barytoxin-Tl1c (116 aa).

Positions 1–20 are cleaved as a signal peptide; that stretch reads MKTIIVFLSLLVLATKFGDA. Positions 21–74 are excised as a propeptide; that stretch reads NEGVNQEQMKEVIQNEFREDFLNEMAAMSLLQQLEAIESTLLEKEADRNSRQKR. 3 cysteine pairs are disulfide-bonded: cysteine 75–cysteine 90, cysteine 82–cysteine 95, and cysteine 89–cysteine 110.

Belongs to the neurotoxin 14 (magi-1) family. 06 (ICK-Trit) subfamily. Expressed by the venom gland.

Its subcellular location is the secreted. Its function is as follows. Ion channel inhibitor. The chain is U16-barytoxin-Tl1c from Trittame loki (Brush-footed trapdoor spider).